We begin with the raw amino-acid sequence, 297 residues long: Formamidopyrimidine-DNA glycosylase (297 aa).

The Schiff-base intermediate with DNA role is filled by Pro2. The Proton donor role is filled by Glu3. Residue Lys58 is the Proton donor; for beta-elimination activity of the active site. His106, Arg133, and Arg178 together coordinate DNA. The FPG-type zinc finger occupies Phe263–His297. Residue Arg287 is the Proton donor; for delta-elimination activity of the active site.

The protein belongs to the FPG family. Monomer. Requires Zn(2+) as cofactor.

The catalysed reaction is Hydrolysis of DNA containing ring-opened 7-methylguanine residues, releasing 2,6-diamino-4-hydroxy-5-(N-methyl)formamidopyrimidine.. It carries out the reaction 2'-deoxyribonucleotide-(2'-deoxyribose 5'-phosphate)-2'-deoxyribonucleotide-DNA = a 3'-end 2'-deoxyribonucleotide-(2,3-dehydro-2,3-deoxyribose 5'-phosphate)-DNA + a 5'-end 5'-phospho-2'-deoxyribonucleoside-DNA + H(+). Involved in base excision repair of DNA damaged by oxidation or by mutagenic agents. Acts as a DNA glycosylase that recognizes and removes damaged bases. Has a preference for oxidized purines, such as 7,8-dihydro-8-oxoguanine (8-oxoG). Has AP (apurinic/apyrimidinic) lyase activity and introduces nicks in the DNA strand. Cleaves the DNA backbone by beta-delta elimination to generate a single-strand break at the site of the removed base with both 3'- and 5'-phosphates. The sequence is that of Formamidopyrimidine-DNA glycosylase from Cupriavidus metallidurans (strain ATCC 43123 / DSM 2839 / NBRC 102507 / CH34) (Ralstonia metallidurans).